A 707-amino-acid chain; its full sequence is Nucleolin (707 aa).

A disordered region spans residues 1–308; the sequence is MVKLAKAGKT…KVEGSEPTTP (308 aa). 3 positions are modified to N6-acetyllysine: Lys9, Lys15, and Lys16. Over residues 24–46 the composition is skewed to acidic residues; sequence VEEDSEDEEMSEDEDDSSGEEEV. Phosphoserine is present on residues Ser28, Ser34, Ser40, and Ser41. The segment covering 56–92 has biased composition (low complexity); it reads ATTTPAKKVVVSQTKKAAVPTPAKKAAVTPGKKAVAT. Repeat 1 spans residues 58 to 65; sequence TTPAKKVV. The interval 58 to 135 is 8 X 8 AA tandem repeats of X-T-P-X-K-K-X-X; that stretch reads TTPAKKVVVS…GAATPAKGAK (78 aa). At Ser67 the chain carries Phosphoserine. A phosphothreonine mark is found at Thr69, Thr76, Thr84, and Thr92. 3 tandem repeats follow at residues 75–82, 83–90, and 91–98. Lys96 is subject to N6-acetyllysine. A Phosphothreonine modification is found at Thr99. A 5; truncated repeat occupies 99 to 104; it reads TPAKVI. An N6-acetyllysine modification is found at Lys102. Copy 6 of the repeat occupies 105–112; it reads PTPGKKGA. Thr106 bears the Phosphothreonine mark. Lys109 and Lys116 each carry N6-acetyllysine. Tandem repeats lie at residues 120-127 and 128-135. Thr121 bears the Phosphothreonine mark. Residues 121-137 show a composition bias toward low complexity; that stretch reads TPGKKGAATPAKGAKNG. Lys124 carries the post-translational modification N6-acetyllysine. 2 positions are modified to phosphoserine: Ser145 and Ser157. Positions 145-170 are enriched in acidic residues; it reads SDEDEDEEDEDDSDEDEDDEEEDEFE. The span at 179–188 shows a compositional bias: low complexity; that stretch reads PAKAAPAAPA. Ser189 and Ser212 each carry phosphoserine. The span at 189–217 shows a compositional bias: acidic residues; that stretch reads SEDEEDDEDEDDEEDDDEEEEDDSEEEVM. Position 220 is a phosphothreonine (Thr220). Residues 241–273 show a composition bias toward acidic residues; the sequence is EEEDDEEEDEDDEDEDDEEEDDEDDDEEEEEEE. A compositionally biased stretch (basic and acidic residues) spans 286–302; the sequence is MTKQKEAPEAKKQKVEG. Lys299 is covalently cross-linked (Glycyl lysine isopeptide (Lys-Gly) (interchain with G-Cter in SUMO1); alternate). Lys299 participates in a covalent cross-link: Glycyl lysine isopeptide (Lys-Gly) (interchain with G-Cter in SUMO2); alternate. Position 303 is a phosphoserine (Ser303). 2 consecutive RRM domains span residues 309–385 and 395–468; these read FNLF…KPKG and RTLL…YTGE. Lys320 carries the post-translational modification N6-acetyllysine. Lys326 participates in a covalent cross-link: Glycyl lysine isopeptide (Lys-Gly) (interchain with G-Cter in SUMO1); alternate. Lys326 participates in a covalent cross-link: Glycyl lysine isopeptide (Lys-Gly) (interchain with G-Cter in SUMO2); alternate. Residue Lys350 is modified to N6-acetyllysine. Ser358 is subject to Phosphoserine. Phosphothreonine is present on Thr369. Lys372 participates in a covalent cross-link: Glycyl lysine isopeptide (Lys-Gly) (interchain with G-Cter in SUMO2). A Glycyl lysine isopeptide (Lys-Gly) (interchain with G-Cter in SUMO2); alternate cross-link involves residue Lys379. Lys379 is subject to N6-acetyllysine; alternate. Lys400 carries the N6-acetyllysine modification. The residue at position 403 (Ser403) is a Phosphoserine. A Phosphothreonine modification is found at Thr407. Lys429 and Lys446 each carry N6-acetyllysine. A phosphoserine mark is found at Ser460 and Ser462. An N6-acetyllysine mark is found at Lys469 and Lys478. RRM domains are found at residues 487-561 and 569-644; these read KTLV…LQGS and KTLF…WAKP. Lys514 participates in a covalent cross-link: Glycyl lysine isopeptide (Lys-Gly) (interchain with G-Cter in SUMO2); alternate. Residue Lys514 is modified to N6-acetyllysine; alternate. Residues Lys522 and Lys569 each carry the N6-acetyllysine modification. Lys574 is covalently cross-linked (Glycyl lysine isopeptide (Lys-Gly) (interchain with G-Cter in SUMO2); alternate). Position 574 is an N6-acetyllysine; alternate (Lys574). Position 577 is a phosphoserine (Ser577). Lys586 participates in a covalent cross-link: Glycyl lysine isopeptide (Lys-Gly) (interchain with G-Cter in SUMO1); alternate. A Glycyl lysine isopeptide (Lys-Gly) (interchain with G-Cter in SUMO2); alternate cross-link involves residue Lys586. Ser588 and Ser616 each carry phosphoserine. A Glycyl lysine isopeptide (Lys-Gly) (interchain with G-Cter in SUMO2) cross-link involves residue Lys621. Residues 639-707 form a disordered region; the sequence is LDWAKPKGEG…KPQGKKTKFE (69 aa). An N6-acetyllysine modification is found at Lys643. The span at 647–696 shows a compositional bias: gly residues; the sequence is EGGFGGRGGGRGGFGGRGGGRGGRGGFGGRGRGGFGGRGGFRGGRGGGGD. Arg653, Arg657, Arg663, Arg667, Arg670, Arg676, Arg678, Arg684, and Arg688 each carry asymmetric dimethylarginine. Arg691 is subject to Asymmetric dimethylarginine; alternate. Residue Arg691 is modified to Omega-N-methylarginine; alternate.

Identified in a IGF2BP1-dependent mRNP granule complex containing untranslated mRNAs. Component of the SWAP complex that consists of NPM1, NCL/nucleolin, PARP1 and SWAP70. Component of a complex which is at least composed of HTATSF1/Tat-SF1, the P-TEFb complex components CDK9 and CCNT1, RNA polymerase II, SUPT5H, and NCL/nucleolin. Interacts with AICDA. Interacts with APTX. Interacts with C1QBP. Interacts with ERBB4. Interacts (via C-terminus) with FMR1 isoform 6 (via N-terminus). Interacts with GZF1; this interaction is important for nucleolar localization of GZF1. Interacts with NSUN2. Interacts with NVL. Interacts (via N-terminus domain) with SETX. Interacts (via RRM1 and C-terminal RRM4/Arg/Gly-rich domains) with TERT; the interaction is important for nucleolar localization of TERT. Interacts with WDR46. Interacts with ZFP36. Interacts with LRRC34. Interacts with RRP1B. Interacts with HNRNPU; this interaction occurs during mitosis. Interacts with RIOK1; RIOK1 recruits NCL to PRMT5 for symmetrically methylation. Interacts with ZBTB7B. Interacts with MDK; this interaction promotes NCL clustering and lateral movements of this complex into lipid rafts leading to MDK internalization. Interacts with HDGF. Interacts with ALKBH2. Interacts with IGFBP5; this interaction is necessary for IGFBP5 localization to the nucleus. Interacts with DDX24 (when ubiquitinated); this interaction may be important during ribosome biogenesis. Some glutamate residues are glycylated by TTLL8. This modification occurs exclusively on glutamate residues and results in a glycine chain on the gamma-carboxyl group. Post-translationally, symmetrically methylated by PRMT5. In terms of tissue distribution, expressed in B-cells that have been induced to switch to various Ig isotypes.

The protein localises to the nucleus. The protein resides in the nucleolus. It localises to the cytoplasm. In terms of biological role, nucleolin is the major nucleolar protein of growing eukaryotic cells. It is found associated with intranucleolar chromatin and pre-ribosomal particles. It induces chromatin decondensation by binding to histone H1. It is thought to play a role in pre-rRNA transcription and ribosome assembly. May play a role in the process of transcriptional elongation. Binds RNA oligonucleotides with 5'-UUAGGG-3' repeats more tightly than the telomeric single-stranded DNA 5'-TTAGGG-3' repeats. The sequence is that of Nucleolin (Ncl) from Mus musculus (Mouse).